The following is a 240-amino-acid chain: Uridylate kinase (240 aa).

12-15 contacts ATP; that stretch reads KLSG. The involved in allosteric activation by GTP stretch occupies residues 20–25; sequence GDQGYG. Gly-54 is a UMP binding site. The ATP site is built by Gly-55 and Arg-59. UMP contacts are provided by residues Asp-74 and 135-142; that span reads TGNPYFST. ATP-binding residues include Asn-163, Tyr-169, and Asp-172.

This sequence belongs to the UMP kinase family. As to quaternary structure, homohexamer.

It localises to the cytoplasm. It catalyses the reaction UMP + ATP = UDP + ADP. Its pathway is pyrimidine metabolism; CTP biosynthesis via de novo pathway; UDP from UMP (UMPK route): step 1/1. Allosterically activated by GTP. Inhibited by UTP. In terms of biological role, catalyzes the reversible phosphorylation of UMP to UDP. In Oceanobacillus iheyensis (strain DSM 14371 / CIP 107618 / JCM 11309 / KCTC 3954 / HTE831), this protein is Uridylate kinase.